The sequence spans 104 residues: DNA-directed RNA polymerase subunit Rpo13 (104 aa).

Disordered stretches follow at residues 1–33 (MVSG…EDEF) and 78–104 (RDSR…SVEG). The segment covering 7-31 (TDEEKEGTSDEEVNEEKEVEETSED) has biased composition (acidic residues). Over residues 80–104 (SRRKAKKAVSKKVKKTKKKEKSVEG) the composition is skewed to basic residues.

It belongs to the archaeal Rpo13 RNA polymerase subunit family. In terms of assembly, part of the 13-subunit RNA polymerase complex.

It is found in the cytoplasm. The enzyme catalyses RNA(n) + a ribonucleoside 5'-triphosphate = RNA(n+1) + diphosphate. DNA-dependent RNA polymerase (RNAP) catalyzes the transcription of DNA into RNA using the four ribonucleoside triphosphates as substrates. Probably binds dsDNA. The chain is DNA-directed RNA polymerase subunit Rpo13 from Saccharolobus solfataricus (strain ATCC 35092 / DSM 1617 / JCM 11322 / P2) (Sulfolobus solfataricus).